Consider the following 76-residue polypeptide: UPF0291 protein BPUM_1689 (76 aa).

Disordered regions lie at residues methionine 1–lysine 31 and aspartate 56–histidine 76. Composition is skewed to basic and acidic residues over residues glutamate 12–lysine 31 and threonine 63–histidine 76.

Belongs to the UPF0291 family.

The protein resides in the cytoplasm. The sequence is that of UPF0291 protein BPUM_1689 from Bacillus pumilus (strain SAFR-032).